Reading from the N-terminus, the 632-residue chain is Chaperone protein HtpG (632 aa).

Residues methionine 1–arginine 339 are a; substrate-binding. The segment at glutamate 340 to arginine 559 is b. The tract at residues methionine 560–alanine 632 is c.

Belongs to the heat shock protein 90 family. In terms of assembly, homodimer.

Its subcellular location is the cytoplasm. Its function is as follows. Molecular chaperone. Has ATPase activity. The protein is Chaperone protein HtpG of Burkholderia thailandensis (strain ATCC 700388 / DSM 13276 / CCUG 48851 / CIP 106301 / E264).